A 243-amino-acid chain; its full sequence is Probable transcriptional regulatory protein LGAS_1276 (243 aa).

The disordered stretch occupies residues 1–22; that stretch reads MSGHSKWHNIQGRKNAQDAKRG.

This sequence belongs to the TACO1 family.

Its subcellular location is the cytoplasm. The protein is Probable transcriptional regulatory protein LGAS_1276 of Lactobacillus gasseri (strain ATCC 33323 / DSM 20243 / BCRC 14619 / CIP 102991 / JCM 1131 / KCTC 3163 / NCIMB 11718 / NCTC 13722 / AM63).